Reading from the N-terminus, the 45-residue chain is MVIFQLEYPLHHLVLFEVDADQPHEHEHDLILMGPFYLQQHRQTN.

Its function is as follows. Involved in T4 DNA replication. Important for the priming of leading strand DNA synthesis at oriE. Binds to ssDNA. The chain is DNA replication protein repEB (repEB) from Enterobacteria phage T4 (Bacteriophage T4).